The following is a 149-amino-acid chain: Large ribosomal subunit protein uL15 (149 aa).

Residues 30 to 63 are disordered; the sequence is GLGKTAGRGHKGSFARKGGGKIKPGFEGGQTPMQ. Positions 36–49 are enriched in basic residues; the sequence is GRGHKGSFARKGGG.

This sequence belongs to the universal ribosomal protein uL15 family. As to quaternary structure, part of the 50S ribosomal subunit.

Its function is as follows. Binds to the 23S rRNA. The polypeptide is Large ribosomal subunit protein uL15 (Xylella fastidiosa (strain 9a5c)).